Consider the following 158-residue polypeptide: Small ribosomal subunit protein uS9 (158 aa).

Belongs to the universal ribosomal protein uS9 family.

The protein is Small ribosomal subunit protein uS9 of Nitrobacter hamburgensis (strain DSM 10229 / NCIMB 13809 / X14).